We begin with the raw amino-acid sequence, 363 residues long: G-protein coupled receptor 4 (363 aa).

Residues 1 to 8 (MGNGTWEG) are Extracellular-facing. N-linked (GlcNAc...) asparagine glycosylation occurs at Asn3. The helical transmembrane segment at 9–45 (CHVDSRVDHLFPPSLYIFVIGVGLPTNCLALWAAYRQ) threads the bilayer. 2 disulfide bridges follow: Cys9/Cys258 and Cys90/Cys168. Residues 46–49 (VRQR) lie on the Cytoplasmic side of the membrane. A helical transmembrane segment spans residues 50-80 (NELGVYLMNLSIADLLYICTLPLWVDYFLHH). At 81-85 (DNWIH) the chain is on the extracellular side. Residues 86–121 (GPGSCKLFGFIFYTNIYISIAFLCCISVDRYLAVAH) traverse the membrane as a helical segment. The Cytoplasmic segment spans residues 122-129 (PLRFARLR). Residues 130 to 156 (RVKTAVAVSSVVWATELGANSVPLFHD) traverse the membrane as a helical segment. The Extracellular segment spans residues 157-172 (ELFRDRYNHTFCFEKF). Positions 157 to 172 (ELFRDRYNHTFCFEKF) are extracellular loop 2 (ECL2). Asn164 carries an N-linked (GlcNAc...) asparagine glycan. Residues 173–210 (PMEGWVAWMNLYRVFVGFLFPWALMLLSYRGILRAVRG) traverse the membrane as a helical segment. Topologically, residues 211 to 214 (SVST) are cytoplasmic. The chain crosses the membrane as a helical span at residues 215–250 (ERQEKAKIKRLALSLIAIVLVCFAPYHVLLLSRSAV). Residues 251 to 260 (YLGHPWDCGF) lie on the Extracellular side of the membrane. The helical transmembrane segment at 261-289 (EERVFSAYHSSLAFTSLNCVADPILYCLV) threads the bilayer. Residues 290 to 363 (NEGARSDVAK…QLKMLPPPAP (74 aa)) lie on the Cytoplasmic side of the membrane. The segment at 344 to 363 (ASPPSQGDQVQLKMLPPPAP) is disordered.

The protein belongs to the G-protein coupled receptor 1 family.

It localises to the cell membrane. Activated by a network of residues that connects an extracellular-facing cavity to Glu-145, a conserved charged residue buried in the transmembrane core of the receptor. Protonation likely drives conformational changes in extracellular loop 2 (ECL2), which stabilizes movement of transmembrane 3 (TM3) and a series of rearrangements that connect the extracellular-facing cavity to Glu-145, a residue only conserved in proton-sensing G-protein coupled receptors. Its function is as follows. Proton-sensing G-protein coupled receptor activated by extracellular pH, which is required to monitor pH changes and generate adaptive reactions. Activated by an optimal pH of 6.8-7.2. Ligand binding causes a conformation change that triggers signaling via guanine nucleotide-binding proteins (G proteins) and modulates the activity of downstream effectors, such as adenylate cyclase. GPR4 is mainly coupled to G(s) G proteins and mediates activation of adenylate cyclase activity. May also couple with G(q) and G(12)/G(13) G proteins. Acts as a key regulator of respiratory sensitivity to CO2/H(+) in brain retrotrapezoid nucleus neurons: acts by mediating detection of protons generated by the formation of carbonic acid in the blood, an important mechanism to impulse to breathe. Also acts as a regulator of acid secretion in the kidney collecting duct by maintaining acid-base homeostasis in the kidney. Acidosis-induced GPR4 activation increases paracellular gap formation and permeability of vascular endothelial cells, possibly through the G(12)/G(13)/Rho GTPase signaling pathway. This Sus scrofa (Pig) protein is G-protein coupled receptor 4 (GPR4).